Reading from the N-terminus, the 265-residue chain is Gap junction beta-4 protein (265 aa).

Residues 2–13 (NWGFLQGILSGV) lie within the membrane without spanning it. At 14–20 (NKYSTAL) the chain is on the cytoplasmic side. Residues 21–40 (GRIWLSVVFIFRVLVYVVAA) form a helical membrane-spanning segment. Topologically, residues 41–73 (EEVWDDEQKDFICNTKQPGCPNVCYDEFFPVSH) are extracellular. 3 disulfide bridges follow: Cys53–Cys175, Cys60–Cys169, and Cys64–Cys164. A helical membrane pass occupies residues 74–94 (VRLWALQLILVTCPSLLVVMH). At 95 to 130 (VAYREERERKHRLKHGPDAPALYSNLSKKRGGLWWT) the chain is on the cytoplasmic side. A helical membrane pass occupies residues 131-151 (YLLSLIFKAAVDSGFLYIFHC). The Extracellular segment spans residues 152-184 (IYKDYDMPRVVACSVQPCPHTVDCYISRPTEKK). Residues 185-205 (VFTYFMVVTAAICILLNLSEV) traverse the membrane as a helical segment. Over 206 to 265 (AYLVGKRCMEVFRPRRQKTSRRHQLPDTCPPYVISKGHPQDESTVLTKAGMATVDAGVYP) the chain is Cytoplasmic.

Belongs to the connexin family. Beta-type (group I) subfamily. As to quaternary structure, a hemichannel or connexon is composed of a hexamer of connexins. A functional gap junction is formed by the apposition of two hemichannels. Forms heteromeric channels with GJB2. Detected in adult heart, kidney, skin and cochlea, where it is detected in spiral ganglion, stria vascularis, spiral limbus and spiral ligament (at protein level).

It is found in the cell membrane. Its subcellular location is the cell junction. The protein resides in the gap junction. Its function is as follows. Structural component of gap junctions. Gap junctions are dodecameric channels that connect the cytoplasm of adjoining cells. They are formed by the docking of two hexameric hemichannels, one from each cell membrane. Small molecules and ions diffuse from one cell to a neighboring cell via the central pore. The polypeptide is Gap junction beta-4 protein (Gjb4) (Rattus norvegicus (Rat)).